Here is a 159-residue protein sequence, read N- to C-terminus: RNA pyrophosphohydrolase (159 aa).

The region spanning 6–149 (GYRPNVGIVI…KRNVYRRMMK (144 aa)) is the Nudix hydrolase domain. Residues 38 to 59 (GGINSGETAEQAMFRELFEEVG) carry the Nudix box motif.

This sequence belongs to the Nudix hydrolase family. RppH subfamily. It depends on a divalent metal cation as a cofactor.

In terms of biological role, accelerates the degradation of transcripts by removing pyrophosphate from the 5'-end of triphosphorylated RNA, leading to a more labile monophosphorylated state that can stimulate subsequent ribonuclease cleavage. The chain is RNA pyrophosphohydrolase from Baumannia cicadellinicola subsp. Homalodisca coagulata.